A 238-amino-acid chain; its full sequence is MSETADTNQTAVVLFSGGQDSTTCLAWALARYHRVHTVAFDYGQRHRVELACRQRVREAIGQHFAGWGARLGEDHLLDLTSLGEISDTSLTRERAIEIRDSGLPDTFVPGRNLLFLTYAAALAWRLQARHLITGVCETDYSGYPDCRDDTIKALQVALNLGMDSHFVLHTPLMWRDKAQTWALAETLGGADLVELIAEHTHTCYLGDRTQRHDWGYGCGECPACRLRAQGWRRHRGLC.

Phe-15 to Leu-25 contributes to the ATP binding site. Residues Cys-203, Cys-218, Cys-221, and Cys-224 each contribute to the Zn(2+) site.

Belongs to the QueC family. Zn(2+) is required as a cofactor.

It catalyses the reaction 7-carboxy-7-deazaguanine + NH4(+) + ATP = 7-cyano-7-deazaguanine + ADP + phosphate + H2O + H(+). Its pathway is purine metabolism; 7-cyano-7-deazaguanine biosynthesis. In terms of biological role, catalyzes the ATP-dependent conversion of 7-carboxy-7-deazaguanine (CDG) to 7-cyano-7-deazaguanine (preQ(0)). This Alkalilimnicola ehrlichii (strain ATCC BAA-1101 / DSM 17681 / MLHE-1) protein is 7-cyano-7-deazaguanine synthase.